Here is a 335-residue protein sequence, read N- to C-terminus: Transmembrane protein 120B-A (335 aa).

Residues 1–40 adopt a coiled-coil conformation; the sequence is MSLQKCQEEWSEIEKEFQQLQETHKVYKQKLEELNSLQNL. 6 helical membrane passes run 100–122, 130–150, 157–177, 193–213, 268–288, and 300–320; these read GLYL…AKFA, FKLY…FVLN, VFNF…SILI, VSTF…YQIF, FLLP…ITLF, and QVFV…LTTL.

It belongs to the TMEM120 family.

It localises to the nucleus inner membrane. Functionally, necessary for efficient adipogenesis. Does not show ion channel activity. This Xenopus laevis (African clawed frog) protein is Transmembrane protein 120B-A (tmem120b-a).